The primary structure comprises 217 residues: DNA-binding transcriptional activator DevR/DosR (217 aa).

One can recognise a Response regulatory domain in the interval 3-119; sequence KVFLVDDHEV…ELARAVKDVG (117 aa). 4-aspartylphosphate is present on D54. The HTH luxR-type domain occupies 143-208; sequence KQDPLSGLTD…QAAVFATELK (66 aa). The H-T-H motif DNA-binding region spans 167 to 186; the sequence is NKQIADRMFLAEKTVKNYVS. Phosphothreonine; by PknH occurs at positions 198 and 205.

In terms of assembly, homodimer. Interacts with NarL. Post-translationally, phosphorylated on Asp-54 by both DevS (DosS) and DosT. Phosphorylated on Thr-198 and Thr-205 by PknH, which enhances DevR dimerization. Aspartate phosphorylation and threonine phosphorylation cooperatively enhance DevR binding to DNA.

The protein resides in the cytoplasm. It is found in the host cytoplasmic vesicle. It localises to the host phagosome. Its function is as follows. Member of the two-component regulatory system DevR/DevS (also called DosR/DosS) involved in onset of the dormancy response. Regulates an approximately 48-member regulon. When phosphorylated binds and activates the promoter of DevR regulon genes in response to hypoxia. The presence of target DNA increases stability of phospho-DevR in vitro. Activates its own transcription under hypoxic but not aerobic conditions, probably binds as a dimer to tandem binding sites within the devR and hspX promoters. Accepts a phosphate group from DevS (DosS) and from DosT. Does not regulate transcription of dosT. The polypeptide is DNA-binding transcriptional activator DevR/DosR (Mycobacterium tuberculosis (strain ATCC 25618 / H37Rv)).